The sequence spans 321 residues: Translation initiation factor eIF2B subunit alpha (321 aa).

Belongs to the eIF-2B alpha/beta/delta subunits family. In terms of assembly, component of the translation initiation factor 2B (eIF2B) complex which is a heterodecamer of two sets of five different subunits: alpha, beta, gamma, delta and epsilon. Subunits alpha, beta and delta comprise a regulatory subcomplex and subunits epsilon and gamma comprise a catalytic subcomplex. Within the complex, the hexameric regulatory complex resides at the center, with the two heterodimeric catalytic subcomplexes bound on opposite sides.

The protein localises to the cytoplasm. It is found in the cytosol. In terms of biological role, acts as a component of the translation initiation factor 2B (eIF2B) complex, which catalyzes the exchange of GDP for GTP on eukaryotic initiation factor 2 (eIF2) gamma subunit. Its guanine nucleotide exchange factor activity is repressed when bound to eIF2 complex phosphorylated on the alpha subunit, thereby limiting the amount of methionyl-initiator methionine tRNA available to the ribosome and consequently global translation is repressed. The protein is Translation initiation factor eIF2B subunit alpha (eif2b1) of Dictyostelium discoideum (Social amoeba).